An 810-amino-acid chain; its full sequence is Type I restriction enzyme EcoAI endonuclease subunit (810 aa).

Residues 183 to 343 form the Helicase ATP-binding domain; sequence EAVSNGQNRV…TDYFGDPVYV (161 aa). 197–203 lines the ATP pocket; that stretch reads ATGTGKT. One can recognise a Helicase C-terminal domain in the interval 412–575; sequence TITDYLKRTN…DIADPESDFE (164 aa). The segment covering 578–588 has biased composition (acidic residues); it reads LEEISEHDEEQ. The tract at residues 578–608 is disordered; the sequence is LEEISEHDEEQVTGVDEPPAPPYQVTDTDDV.

Belongs to the HsdR family. The type I restriction/modification system is composed of three polypeptides R, M and S. The restriction enzyme has stoichiometry R(2)M(2)S(1) while the methyltransferase is M(2)S(1).

It catalyses the reaction Endonucleolytic cleavage of DNA to give random double-stranded fragments with terminal 5'-phosphates, ATP is simultaneously hydrolyzed.. Its function is as follows. The subtype B restriction (R) subunit of a type I restriction enzyme that recognizes 5'-GAGN(7)GTCA-3' and cleaves a random distance away. Subunit R is required for both nuclease and ATPase activities, but not for modification. After locating a non-methylated recognition site, the enzyme complex serves as a molecular motor that translocates DNA in an ATP-dependent manner until a collision occurs that triggers cleavage. In Escherichia coli, this protein is Type I restriction enzyme EcoAI endonuclease subunit.